Consider the following 218-residue polypeptide: Small ribosomal subunit protein mS34 (218 aa).

Positions K180–V218 are disordered. The segment covering I196 to R212 has biased composition (basic and acidic residues).

Belongs to the mitochondrion-specific ribosomal protein mS34 family. Component of the mitochondrial small ribosomal subunit (mt-SSU). Mature mammalian 55S mitochondrial ribosomes consist of a small (28S) and a large (39S) subunit. The 28S small subunit contains a 12S ribosomal RNA (12S mt-rRNA) and 30 different proteins. The 39S large subunit contains a 16S rRNA (16S mt-rRNA), a copy of mitochondrial valine transfer RNA (mt-tRNA(Val)), which plays an integral structural role, and 52 different proteins.

It localises to the mitochondrion. Its function is as follows. Required for mitochondrial translation, plays a role in maintaining the stability of the small ribosomal subunit and the 12S rRNA that are required for mitoribosome formation. This is Small ribosomal subunit protein mS34 (MRPS34) from Homo sapiens (Human).